The sequence spans 610 residues: Butyryl-CoA dehydrogenase Swol_1933 (610 aa).

The active-site Proton acceptor is Glu-451.

The protein belongs to the acyl-CoA dehydrogenase family. Requires FAD as cofactor.

The protein resides in the cytoplasm. The enzyme catalyses butanoyl-CoA + oxidized [electron-transfer flavoprotein] + H(+) = (2E)-butenoyl-CoA + reduced [electron-transfer flavoprotein]. It carries out the reaction a short-chain 2,3-saturated fatty acyl-CoA + oxidized [electron-transfer flavoprotein] + H(+) = a short-chain (2E)-enoyl-CoA + reduced [electron-transfer flavoprotein]. Its pathway is lipid metabolism; butanoate metabolism. Involved in syntrophic growth of S.wolfei with butyrate, as part of the butyrate oxidation pathway. Catalyzes the oxidation of butanoyl-CoA to crotonyl-CoA. Probably passes the electrons released by this reaction on to electron-transfer flavoproteins (EtfAB) to finally generate hydrogen and/or formate. The chain is Butyryl-CoA dehydrogenase Swol_1933 from Syntrophomonas wolfei subsp. wolfei (strain DSM 2245B / Goettingen).